Consider the following 222-residue polypeptide: Adenylate kinase (222 aa).

Serine 2 is a propeptide (removed in mature form). 2 positions are modified to N-acetylserine: serine 2 and serine 3. Residue 16 to 21 (GAGKGT) coordinates ATP. The segment at 36–65 (ATGDMLRSQIAKGTQLGLEAKKIMDQGGLV) is NMP. AMP contacts are provided by residues threonine 37, arginine 42, 63-65 (GLV), 92-95 (GFPR), and glutamine 99. The segment at 133–170 (GRLIHPASGRSYHKIFNPPKEDMKDDVTGEALVQRSDD) is LID. ATP-binding positions include arginine 134 and 143 to 144 (SY). Residues arginine 167 and arginine 178 each contribute to the AMP site. Glutamine 206 is a binding site for ATP.

It belongs to the adenylate kinase family. AK2 subfamily. Monomer.

It is found in the cytoplasm. It localises to the cytosol. The protein localises to the mitochondrion intermembrane space. It carries out the reaction AMP + ATP = 2 ADP. Functionally, catalyzes the reversible transfer of the terminal phosphate group between ATP and AMP. Plays an important role in cellular energy homeostasis and in adenine nucleotide metabolism. Adenylate kinase activity is critical for regulation of the phosphate utilization and the AMP de novo biosynthesis pathways. This chain is Adenylate kinase, found in Saccharomyces cerevisiae (strain YJM789) (Baker's yeast).